Reading from the N-terminus, the 228-residue chain is Aldehyde dehydrogenase 9 (228 aa).

76-81 (GSTETA) is a binding site for NAD(+). Catalysis depends on residues glutamate 99 and cysteine 132.

The protein belongs to the aldehyde dehydrogenase family.

The enzyme catalyses an aldehyde + NAD(+) + H2O = a carboxylate + NADH + 2 H(+). The protein operates within alcohol metabolism; ethanol degradation; acetate from ethanol: step 2/2. This is Aldehyde dehydrogenase 9 (ALDH9) from Polyandrocarpa misakiensis (Tunicate).